Reading from the N-terminus, the 641-residue chain is SUMO-activating enzyme subunit 2-A (641 aa).

ATP is bound by residues G24–G29, D48, N56–R59, K72, S95–I96, and D117–R122. Zn(2+)-binding residues include C158 and C161. The Glycyl thioester intermediate role is filled by C173. Positions 439 and 442 each coordinate Zn(2+). Residues G546–D641 form a disordered region. The span at V548 to V561 shows a compositional bias: basic and acidic residues. A compositionally biased stretch (polar residues) spans K562 to A579. Composition is skewed to acidic residues over residues Q582 to S594 and P630 to D641.

This sequence belongs to the ubiquitin-activating E1 family. Heterodimer of sae1 and uba2/sae2. The heterodimer corresponds to the two domains that are encoded on a single polypeptide chain in ubiquitin-activating enzyme E1. Interacts with ube2i.

Its subcellular location is the nucleus. It functions in the pathway protein modification; protein sumoylation. Functionally, the heterodimer acts as an E1 ligase for sumo1, sumo2, and sumo3. It mediates ATP-dependent activation of sumo proteins followed by formation of a thioester bond between a sumo protein and a conserved active site cysteine residue on uba2/sae2. The protein is SUMO-activating enzyme subunit 2-A (uba2-a) of Xenopus laevis (African clawed frog).